Consider the following 168-residue polypeptide: RNA pyrophosphohydrolase (168 aa).

The 153-residue stretch at 8–160 (PYRTCVGIAL…KRPVYERVAK (153 aa)) folds into the Nudix hydrolase domain. A Nudix box motif is present at residues 47 to 68 (GGVDPGEDAWEAAKRELYEETS).

It belongs to the Nudix hydrolase family. RppH subfamily. It depends on a divalent metal cation as a cofactor.

Functionally, accelerates the degradation of transcripts by removing pyrophosphate from the 5'-end of triphosphorylated RNA, leading to a more labile monophosphorylated state that can stimulate subsequent ribonuclease cleavage. In Bradyrhizobium sp. (strain ORS 278), this protein is RNA pyrophosphohydrolase.